The primary structure comprises 507 residues: ATP synthase subunit alpha, chloroplastic (507 aa).

An ATP-binding site is contributed by 170-177; sequence GDRQTGKT.

The protein belongs to the ATPase alpha/beta chains family. F-type ATPases have 2 components, CF(1) - the catalytic core - and CF(0) - the membrane proton channel. CF(1) has five subunits: alpha(3), beta(3), gamma(1), delta(1), epsilon(1). CF(0) has four main subunits: a, b, b' and c.

The protein localises to the plastid. It is found in the chloroplast thylakoid membrane. The catalysed reaction is ATP + H2O + 4 H(+)(in) = ADP + phosphate + 5 H(+)(out). Functionally, produces ATP from ADP in the presence of a proton gradient across the membrane. The alpha chain is a regulatory subunit. This Pelargonium hortorum (Common geranium) protein is ATP synthase subunit alpha, chloroplastic.